A 217-amino-acid polypeptide reads, in one-letter code: MESVALYSFQATESDELAFNKGDTLKILNMEDDQNWYKAELRGAEGFVPKNYIRLKPHPWYSGRISRQLAEEILMKRNHQGAFLIRESESSPGEFSVSVNYGDQVQHFKVLRDPSGKYYLWEEKFNSLNELVAFYRTTTIAKKRQVFLQDEEPLPKPPRACFAQAQFDFSAQDPSQLSFRRGDIIEVLERLDPSWWRGRLSGRIGFFPRSYVQPVHM.

The region spanning 1 to 58 is the SH3 1 domain; sequence MESVALYSFQATESDELAFNKGDTLKILNMEDDQNWYKAELRGAEGFVPKNYIRLKPH. One can recognise an SH2 domain in the interval 60–152; the sequence is WYSGRISRQL…KRQVFLQDEE (93 aa). The SH3 2 domain maps to 158 to 217; that stretch reads PRACFAQAQFDFSAQDPSQLSFRRGDIIEVLERLDPSWWRGRLSGRIGFFPRSYVQPVHM.

This sequence belongs to the GRB2/sem-5/DRK family. As to quaternary structure, associates through its SH2 domain with ligand-activated receptors for stem cell factor (KIT) and erythropoietin (EPOR). Also forms a stable complex with the Bcr-Abl oncoprotein. GRAP is associated with the Ras guanine nucleotide exchange factor SOS1, primarily through its N-terminal SH3 domain. Interacts with phosphorylated LAT upon TCR activation. Interacts with SHB.

It localises to the membrane. It is found in the synapse. Functionally, couples signals from receptor and cytoplasmic tyrosine kinases to the Ras signaling pathway. Plays a role in the inner ear and in hearing. This is GRB2-related adapter protein (GRAP) from Bos taurus (Bovine).